A 398-amino-acid polypeptide reads, in one-letter code: Acetate kinase (398 aa).

Asparagine 10 is a Mg(2+) binding site. Position 17 (lysine 17) interacts with ATP. Arginine 89 is a substrate binding site. Residue aspartate 148 is the Proton donor/acceptor of the active site. ATP is bound by residues histidine 208–glycine 212, aspartate 283–arginine 285, and glycine 331–asparagine 335. Glutamate 385 is a Mg(2+) binding site.

The protein belongs to the acetokinase family. Homodimer. It depends on Mg(2+) as a cofactor. Mn(2+) is required as a cofactor.

Its subcellular location is the cytoplasm. The catalysed reaction is acetate + ATP = acetyl phosphate + ADP. It functions in the pathway metabolic intermediate biosynthesis; acetyl-CoA biosynthesis; acetyl-CoA from acetate: step 1/2. In terms of biological role, catalyzes the formation of acetyl phosphate from acetate and ATP. Can also catalyze the reverse reaction. The chain is Acetate kinase from Histophilus somni (strain 129Pt) (Haemophilus somnus).